The sequence spans 509 residues: Tyrosine-protein phosphatase non-receptor type substrate 1 (509 aa).

Positions 1–31 (MEPAGPAPGRLGPLLFCLLLSASCFCAGASG) are cleaved as a signal peptide. The 107-residue stretch at 32-138 (KELKVTQADK…IVEPDTEIKS (107 aa)) folds into the Ig-like V-type domain. The Extracellular portion of the chain corresponds to 32–373 (KELKVTQADK…PDNNAYYNWN (342 aa)). Residues Asn54, Asn93, Asn169, Asn181, Asn205, Asn209, Asn242, Asn246, Asn271, Asn293, Asn312, Asn320, and Asn345 are each glycosylated (N-linked (GlcNAc...) asparagine). Cys55 and Cys122 are disulfide-bonded. Ig-like C1-type domains are found at residues 150–248 (PSSP…ANFS) and 255–349 (PTLK…HTVR). The cysteines at positions 172 and 229 are disulfide-linked. Cys274 and Cys332 are joined by a disulfide. Residues 374–394 (VFIGVGVACALLVVLLMAALY) form a helical membrane-spanning segment. Over 395–509 (LLRIKQKKAK…EYASVQVQRK (115 aa)) the chain is Cytoplasmic. Residue Tyr436 is modified to Phosphotyrosine; by Tyr-kinases. The SH2-binding motif lies at 436 to 439 (YADL). The tract at residues 441–472 (LPKEKKPAPRVPEPNNHTEYASIETGKLPRPE) is disordered. An SH3-binding motif is present at residues 446–451 (KPAPRV). A phosphotyrosine; by Tyr-kinases mark is found at Tyr460, Tyr477, and Tyr501. Short sequence motifs (SH2-binding) lie at residues 460-463 (YASI), 477-480 (YADL), and 501-504 (YASV). The disordered stretch occupies residues 485–509 (LNRAQPTPKPEPSFSEYASVQVQRK). Residues 500–509 (EYASVQVQRK) are compositionally biased toward polar residues.

In terms of assembly, binds PTPN11 when tyrosine-phosphorylated, except in macrophages, where it primarily binds PTPN6. Binds GRB2 in vitro. Binds FGR. Binds JAK2 irrespective of its phosphorylation status and forms a stable complex. Binds SCAP1 and/or SCAP2. The resulting complex recruits FYB1. Binds PTK2B. Interacts with TRIM2. N-glycosylated. In terms of processing, phosphorylated on tyrosine residues in response to insulin, cell adhesion or epidermal growth factors. Dephosphorylated by PTPN11. Highly expressed in brain, spleen, lung, liver and kidney. Detected at lower levels in heart. Highly expressed in alveolar and peritoneal macrophages, and at lower levels in dendritic cells.

Its subcellular location is the membrane. In terms of biological role, immunoglobulin-like cell surface receptor for CD47. Acts as docking protein and induces translocation of PTPN6, PTPN11 and other binding partners from the cytosol to the plasma membrane. Supports adhesion of cerebellar neurons, neurite outgrowth and glial cell attachment. May play a key role in intracellular signaling during synaptogenesis and in synaptic function. Involved in the negative regulation of receptor tyrosine kinase-coupled cellular responses induced by cell adhesion, growth factors or insulin. Mediates negative regulation of phagocytosis, mast cell activation and dendritic cell activation. CD47 binding prevents maturation of immature dendritic cells and inhibits cytokine production by mature dendritic cells. Plays a role in antiviral immunity and limits new world arenavirus infection by decreasing virus internalization. Receptor for THBS1. Interaction with THBS1 stimulates phosphorylation of SIRPA. In response to THBS1, involved in ROS signaling in non-phagocytic cells, stimulating NADPH oxidase-derived ROS production. The protein is Tyrosine-protein phosphatase non-receptor type substrate 1 (Sirpa) of Rattus norvegicus (Rat).